Consider the following 298-residue polypeptide: tRNA-uridine aminocarboxypropyltransferase 2 (298 aa).

Residue Met-1 is modified to N-acetylmethionine. The segment covering 1-10 (MEPQAEERTL) has biased composition (basic and acidic residues). A disordered region spans residues 1 to 55 (MEPQAEERTLGEPAPPPSGALASPTPDEEERTEGGAPPTATPAGASGDSTSADGL). Residues 34 to 45 (GGAPPTATPAGA) show a composition bias toward low complexity. Phosphoserine is present on Ser-132. The DXTW signature appears at 178-181 (DGTW).

This sequence belongs to the TDD superfamily. DTWD2 family.

The protein resides in the nucleus. Its subcellular location is the cytoplasm. The catalysed reaction is a uridine in tRNA + S-adenosyl-L-methionine = a 3-[(3S)-3-amino-3-carboxypropyl]uridine in tRNA + S-methyl-5'-thioadenosine + H(+). Its function is as follows. Catalyzes the formation of 3-(3-amino-3-carboxypropyl)uridine (acp3U) at position 20a in the D-loop of several cytoplasmic tRNAs (acp3U(20a)). Also has a weak activity to form acp3U at position 20 in the D-loop of tRNAs (acp3U(20)). Involved in glycoRNA biosynthesis by mediating formation of acp3U, which acts as an attachment site for N-glycans on tRNAs. GlycoRNAs consist of RNAs modified with secretory N-glycans that are presented on the cell surface. The polypeptide is tRNA-uridine aminocarboxypropyltransferase 2 (Mus musculus (Mouse)).